The primary structure comprises 213 residues: Adenylate kinase (213 aa).

Residue 10–15 (GSGKGS) participates in ATP binding. The tract at residues 30-60 (STGNLFRAILKEDSELARKIKEINVSGGKLV) is NMP. AMP contacts are provided by residues T31, R36, 58–60 (KLV), 87–90 (GYPR), and Q94. Residues 123 to 160 (GRWMCPKCAGIYNIHFKKPQVHGLCDNDQATLYQRADD) are LID. An ATP-binding site is contributed by R124. C127 and C130 together coordinate Zn(2+). An ATP-binding site is contributed by 133-134 (IY). C147 and D150 together coordinate Zn(2+). Positions 157 and 168 each coordinate AMP. Q196 contributes to the ATP binding site.

This sequence belongs to the adenylate kinase family. As to quaternary structure, monomer.

It is found in the cytoplasm. The catalysed reaction is AMP + ATP = 2 ADP. Its pathway is purine metabolism; AMP biosynthesis via salvage pathway; AMP from ADP: step 1/1. Functionally, catalyzes the reversible transfer of the terminal phosphate group between ATP and AMP. Plays an important role in cellular energy homeostasis and in adenine nucleotide metabolism. The sequence is that of Adenylate kinase from Ureaplasma parvum serovar 3 (strain ATCC 27815 / 27 / NCTC 11736).